Reading from the N-terminus, the 338-residue chain is tRNA N6-adenosine threonylcarbamoyltransferase (338 aa).

Residues H111 and H115 each contribute to the Fe cation site. Residues 134–138 (LVSGG), D167, G180, and N272 contribute to the substrate site. D300 is a Fe cation binding site.

Belongs to the KAE1 / TsaD family. The cofactor is Fe(2+).

The protein resides in the cytoplasm. It catalyses the reaction L-threonylcarbamoyladenylate + adenosine(37) in tRNA = N(6)-L-threonylcarbamoyladenosine(37) in tRNA + AMP + H(+). Required for the formation of a threonylcarbamoyl group on adenosine at position 37 (t(6)A37) in tRNAs that read codons beginning with adenine. Is involved in the transfer of the threonylcarbamoyl moiety of threonylcarbamoyl-AMP (TC-AMP) to the N6 group of A37, together with TsaE and TsaB. TsaD likely plays a direct catalytic role in this reaction. In Shewanella oneidensis (strain ATCC 700550 / JCM 31522 / CIP 106686 / LMG 19005 / NCIMB 14063 / MR-1), this protein is tRNA N6-adenosine threonylcarbamoyltransferase.